Reading from the N-terminus, the 870-residue chain is Outer membrane usher protein FimD (870 aa).

A signal peptide spans 1 to 27; the sequence is MKKTTWFAGRFPGYVSPLSSVALSVLA. Cys843 and Cys865 are joined by a disulfide.

This sequence belongs to the fimbrial export usher family.

The protein resides in the cell outer membrane. Functionally, involved in the export and assembly of FimA fimbrial subunits across the outer membrane. The protein is Outer membrane usher protein FimD (fimD) of Salmonella typhimurium (strain LT2 / SGSC1412 / ATCC 700720).